The following is a 180-amino-acid chain: Protein SPMIP9 (180 aa).

Microtubule inner protein component of sperm flagellar doublet microtubules.

The protein resides in the nucleus. It is found in the cytoplasm. Its subcellular location is the cytoskeleton. It localises to the flagellum axoneme. Microtubule inner protein (MIP) part of the dynein-decorated doublet microtubules (DMTs) in flagella axoneme. This Bos taurus (Bovine) protein is Protein SPMIP9 (SPMIP9).